The sequence spans 749 residues: Probable serine/threonine-protein kinase drkC (749 aa).

The signal sequence occupies residues 1–31 (MIIINKYIRMNKIAILFSFFILICCTGYSIS). Residues 32–423 (YKINGINENK…TSPNYQKIIY (392 aa)) lie on the Extracellular side of the membrane. The segment at 124–153 (DRTDQVSTSSSSSSFSEENKKSSSDDSAPA) is disordered. Over residues 130-139 (STSSSSSSFS) the composition is skewed to low complexity. N157, N189, N283, N358, N373, N381, and N397 each carry an N-linked (GlcNAc...) asparagine glycan. Residues 424–444 (IVVGVGIAVLLIIAVGIYFII) form a helical membrane-spanning segment. The Cytoplasmic portion of the chain corresponds to 445–749 (RLRIKNKRLN…QEIVKRLEAM (305 aa)). Residues 491–749 (IVVQNRIGRG…QEIVKRLEAM (259 aa)) enclose the Protein kinase domain. Residues 497–505 (IGRGSCAEV) and K518 contribute to the ATP site. D615 serves as the catalytic Proton acceptor.

This sequence belongs to the protein kinase superfamily. TKL Ser/Thr protein kinase family.

The protein localises to the membrane. The catalysed reaction is L-seryl-[protein] + ATP = O-phospho-L-seryl-[protein] + ADP + H(+). It catalyses the reaction L-threonyl-[protein] + ATP = O-phospho-L-threonyl-[protein] + ADP + H(+). This Dictyostelium discoideum (Social amoeba) protein is Probable serine/threonine-protein kinase drkC (drkC).